The sequence spans 335 residues: Ornithine carbamoyltransferase (335 aa).

Residues serine 57 to threonine 60, arginine 108, and histidine 135 to glutamine 138 contribute to the carbamoyl phosphate site. Residues asparagine 168, aspartate 232, and serine 236–methionine 237 each bind L-ornithine. Carbamoyl phosphate contacts are provided by residues cysteine 274–leucine 275 and arginine 319.

The protein belongs to the aspartate/ornithine carbamoyltransferase superfamily. OTCase family.

The protein localises to the cytoplasm. It carries out the reaction carbamoyl phosphate + L-ornithine = L-citrulline + phosphate + H(+). It participates in amino-acid degradation; L-arginine degradation via ADI pathway; carbamoyl phosphate from L-arginine: step 2/2. Functionally, reversibly catalyzes the transfer of the carbamoyl group from carbamoyl phosphate (CP) to the N(epsilon) atom of ornithine (ORN) to produce L-citrulline. The polypeptide is Ornithine carbamoyltransferase (Limosilactobacillus reuteri (strain DSM 20016) (Lactobacillus reuteri)).